The chain runs to 166 residues: Large ribosomal subunit protein bL19 (166 aa).

It belongs to the bacterial ribosomal protein bL19 family.

This protein is located at the 30S-50S ribosomal subunit interface and may play a role in the structure and function of the aminoacyl-tRNA binding site. The polypeptide is Large ribosomal subunit protein bL19 (Chelativorans sp. (strain BNC1)).